Here is a 557-residue protein sequence, read N- to C-terminus: Membrane protein insertase YidC (557 aa).

The next 5 membrane-spanning stretches (helical) occupy residues 3–23, 363–383, 437–457, 476–496, and 507–527; these read IKRT…FDNW, FVGN…AVFF, LPVV…LASV, PYFI…KLNP, and MMFM…GLVL.

It belongs to the OXA1/ALB3/YidC family. Type 1 subfamily. In terms of assembly, interacts with the Sec translocase complex via SecD. Specifically interacts with transmembrane segments of nascent integral membrane proteins during membrane integration.

Its subcellular location is the cell inner membrane. Its function is as follows. Required for the insertion and/or proper folding and/or complex formation of integral membrane proteins into the membrane. Involved in integration of membrane proteins that insert both dependently and independently of the Sec translocase complex, as well as at least some lipoproteins. Aids folding of multispanning membrane proteins. The chain is Membrane protein insertase YidC from Burkholderia thailandensis (strain ATCC 700388 / DSM 13276 / CCUG 48851 / CIP 106301 / E264).